A 319-amino-acid polypeptide reads, in one-letter code: MDGVTYQRFPTVKIRELKDDYAKFELRETDVSMANALRRVMISEVPTMAIHLVKIEVNSSVLNDEFIAQRLSLIPLTSERAMSMRFCQDCEDCNGDEHCEFCSVEFPLSAKCVTDQTLDVTSRDLYSADPTVTPVDFTSNSSTSDSSEHKGIIIAKLRRGQELKLKALARKGIGKDHAKWSPAATVTYMYEPDIIINEEMMNTLTDEEKIDLIESSPTKVFGIDPVTGQVVVVDPEAYTYDEEVIKKAEAMGKPGLIEIHPKHDSFVFTVESTGALKASQLVLNAIDILKQKLDAIRLSDNTVEADDQFGELGAHMREG.

M1 carries the N-acetylmethionine modification.

The protein belongs to the archaeal Rpo3/eukaryotic RPB3 RNA polymerase subunit family. In terms of assembly, component of the RNA polymerase IV and V complexes. Interacts with NRPB11, SHH1, GRP23 and NRPD1.

Its subcellular location is the nucleus. Functionally, DNA-dependent RNA polymerase catalyzes the transcription of DNA into RNA using the four ribonucleoside triphosphates as substrates. Component of RNA polymerases IV and V which mediate short-interfering RNAs (siRNA) accumulation and subsequent RNA-directed DNA methylation-dependent (RdDM) transcriptional gene silencing (TGS) of endogenous repeated sequences, including transposable elements. This Arabidopsis thaliana (Mouse-ear cress) protein is DNA-directed RNA polymerases IV and V subunit 3B (NRPD3B).